The chain runs to 150 residues: Lipoprotein signal peptidase (150 aa).

3 consecutive transmembrane segments (helical) span residues 8–28 (FYAL…LAHA), 58–78 (GFSW…GWFL), and 81–101 (TTGS…NVFD). Active-site residues include D116 and D132. Residues 126-146 (VVFNIADLFILAGVFGTFLFL) form a helical membrane-spanning segment.

This sequence belongs to the peptidase A8 family.

It localises to the cell membrane. It carries out the reaction Release of signal peptides from bacterial membrane prolipoproteins. Hydrolyzes -Xaa-Yaa-Zaa-|-(S,diacylglyceryl)Cys-, in which Xaa is hydrophobic (preferably Leu), and Yaa (Ala or Ser) and Zaa (Gly or Ala) have small, neutral side chains.. The protein operates within protein modification; lipoprotein biosynthesis (signal peptide cleavage). Its function is as follows. This protein specifically catalyzes the removal of signal peptides from prolipoproteins. The chain is Lipoprotein signal peptidase from Tropheryma whipplei (strain TW08/27) (Whipple's bacillus).